We begin with the raw amino-acid sequence, 166 residues long: Fer3-like protein (166 aa).

Positions 57-88 (FEEGDPEEEECEVDQGDGEEEEEEERGRGVSL) are disordered. A compositionally biased stretch (acidic residues) spans 60 to 80 (GDPEEEECEVDQGDGEEEEEE). One can recognise a bHLH domain in the interval 101 to 153 (AQRQAANIRERKRMFNLNEAFDQLRRKVPTFAYEKRLSRIETLRLAIVYISFM).

As to quaternary structure, heterodimer with TCF3/E12. Interacts with the bHLH domain of TCF3/E12.

It is found in the nucleus. In terms of biological role, transcription factor that binds to the E-box and functions as inhibitor of transcription. DNA binding requires dimerization with an E protein. Inhibits transcription activation by ASCL1/MASH1 by sequestering E proteins. The sequence is that of Fer3-like protein (FERD3L) from Homo sapiens (Human).